We begin with the raw amino-acid sequence, 218 residues long: Cytochrome b6 (218 aa).

A helical membrane pass occupies residues 35–55 (IFYCLGGITLVCFLIQFATGF). Cys38 is a heme c binding site. His89 and His103 together coordinate heme b. The next 3 membrane-spanning stretches (helical) occupy residues 93-113 (ASMMVLMLILHVFRVYLTGGF), 119-139 (LTWVTGVVMAVITVAFGVTGY), and 189-209 (LHTFVLPWSLAVFMLMHFLMI). 2 residues coordinate heme b: His190 and His205.

This sequence belongs to the cytochrome b family. PetB subfamily. The 4 large subunits of the cytochrome b6-f complex are cytochrome b6, subunit IV (17 kDa polypeptide, PetD), cytochrome f and the Rieske protein, while the 4 small subunits are PetG, PetL, PetM and PetN. The complex functions as a dimer. It depends on heme b as a cofactor. Heme c serves as cofactor.

It localises to the cellular thylakoid membrane. Component of the cytochrome b6-f complex, which mediates electron transfer between photosystem II (PSII) and photosystem I (PSI), cyclic electron flow around PSI, and state transitions. The protein is Cytochrome b6 of Prochlorococcus marinus (strain MIT 9301).